A 440-amino-acid polypeptide reads, in one-letter code: Glutamyl-tRNA reductase (440 aa).

Substrate is bound by residues 50 to 53, serine 109, 114 to 116, and glutamine 120; these read TCNR and EPQ. Catalysis depends on cysteine 51, which acts as the Nucleophile. 189–194 provides a ligand contact to NADP(+); sequence GAGEMA.

The protein belongs to the glutamyl-tRNA reductase family. Homodimer.

It carries out the reaction (S)-4-amino-5-oxopentanoate + tRNA(Glu) + NADP(+) = L-glutamyl-tRNA(Glu) + NADPH + H(+). The protein operates within porphyrin-containing compound metabolism; protoporphyrin-IX biosynthesis; 5-aminolevulinate from L-glutamyl-tRNA(Glu): step 1/2. Its function is as follows. Catalyzes the NADPH-dependent reduction of glutamyl-tRNA(Glu) to glutamate 1-semialdehyde (GSA). This Nitratidesulfovibrio vulgaris (strain ATCC 29579 / DSM 644 / CCUG 34227 / NCIMB 8303 / VKM B-1760 / Hildenborough) (Desulfovibrio vulgaris) protein is Glutamyl-tRNA reductase.